The chain runs to 1279 residues: Maestro heat-like repeat-containing protein family member 7 (1279 aa).

A disordered region spans residues 1–145 (MALSRGTSLI…NSSRPCSEDV (145 aa)). The segment covering 39–61 (PDLALAPPPEHALALTPALHPAL) has biased composition (low complexity). Composition is skewed to polar residues over residues 71–106 (PVSN…NHTS) and 124–140 (PSST…SSRP). Asn-200, Asn-210, Asn-255, Asn-267, and Asn-296 each carry an N-linked (GlcNAc...) asparagine glycan. Phosphoserine is present on Ser-356. The N-linked (GlcNAc...) asparagine glycan is linked to Asn-541. The next 2 membrane-spanning stretches (helical) occupy residues 548 to 568 (TLVT…LLLG) and 722 to 742 (LLPI…ALLM). HEAT repeat units follow at residues 913-950 (QELC…MEQV), 992-1029 (AKVQ…GQGK), 1035-1072 (AVYV…KLQT), and 1080-1117 (EQLT…FMNW).

Its subcellular location is the membrane. The polypeptide is Maestro heat-like repeat-containing protein family member 7 (Mroh7) (Mus musculus (Mouse)).